A 134-amino-acid polypeptide reads, in one-letter code: Small ribosomal subunit protein uS11 (134 aa).

The protein belongs to the universal ribosomal protein uS11 family. In terms of assembly, part of the 30S ribosomal subunit. Interacts with proteins S7 and S18. Binds to IF-3.

Functionally, located on the platform of the 30S subunit, it bridges several disparate RNA helices of the 16S rRNA. Forms part of the Shine-Dalgarno cleft in the 70S ribosome. The sequence is that of Small ribosomal subunit protein uS11 from Albidiferax ferrireducens (strain ATCC BAA-621 / DSM 15236 / T118) (Rhodoferax ferrireducens).